Here is a 343-residue protein sequence, read N- to C-terminus: Protease HtpX homolog (343 aa).

The next 2 helical transmembrane spans lie at 7–24 and 29–46; these read TMLL…GYLV and GMVV…FSYW. H130 is a Zn(2+) binding site. E131 is a catalytic residue. H134 serves as a coordination point for Zn(2+). 2 helical membrane passes run 145–165 and 177–197; these read LTAT…LMGM and GAGM…AMLV. Residue E206 coordinates Zn(2+). Residues 308-343 are disordered; it reads NLEDEDLNPEAQNGFTHNQKKKTVRRGKDRPTWLRH. Residues 325–335 show a composition bias toward basic residues; that stretch reads NQKKKTVRRGK.

This sequence belongs to the peptidase M48B family. Zn(2+) serves as cofactor.

It localises to the cell inner membrane. The polypeptide is Protease HtpX homolog (Bartonella bacilliformis (strain ATCC 35685 / KC583 / Herrer 020/F12,63)).